The chain runs to 394 residues: Elongation factor Tu (394 aa).

Residues 10–204 (KLHINVGTIG…VLDSYIPEPK (195 aa)) form the tr-type G domain. The G1 stretch occupies residues 19–26 (GHVDHGKT). Position 19-26 (19-26 (GHVDHGKT)) interacts with GTP. Residue threonine 26 coordinates Mg(2+). The segment at 60 to 64 (GITIN) is G2. Positions 81-84 (DCPG) are G3. GTP contacts are provided by residues 81–85 (DCPGH) and 136–139 (NKCD). Positions 136–139 (NKCD) are G4. Positions 174-176 (SAL) are G5.

This sequence belongs to the TRAFAC class translation factor GTPase superfamily. Classic translation factor GTPase family. EF-Tu/EF-1A subfamily. As to quaternary structure, monomer.

The protein resides in the cytoplasm. It carries out the reaction GTP + H2O = GDP + phosphate + H(+). In terms of biological role, GTP hydrolase that promotes the GTP-dependent binding of aminoacyl-tRNA to the A-site of ribosomes during protein biosynthesis. This is Elongation factor Tu from Baumannia cicadellinicola subsp. Homalodisca coagulata.